The sequence spans 23 residues: Alyteserin-1d (23 aa).

At asparagine 23 the chain carries Asparagine amide.

In terms of tissue distribution, expressed by the skin glands.

The protein resides in the secreted. Its subcellular location is the target cell membrane. Antibacterial peptide with amphipathic alpha-helical structure. Shows selective growth inhibitory activity against the Gram-negative bacteria E.coli (MIC=25 uM) Has a weak hemolytic activity against human erythrocytes (LC(50)&gt;100 uM). Is very weakly active against S.aureus (MIC=200 uM). The chain is Alyteserin-1d from Alytes obstetricans (Common midwife toad).